Reading from the N-terminus, the 249-residue chain is Triosephosphate isomerase (249 aa).

Substrate-binding residues include Asn12 and Lys14. Position 14 is an N6-acetyllysine (Lys14). A 3'-nitrotyrosine modification is found at Tyr68. Phosphoserine is present on residues Ser80 and Ser106. Lys142 is covalently cross-linked (Glycyl lysine isopeptide (Lys-Gly) (interchain with G-Cter in SUMO1)). Lys149 carries the N6-succinyllysine modification. An N6-acetyllysine; alternate modification is found at Lys156. At Lys156 the chain carries N6-succinyllysine; alternate. Ser159 carries the phosphoserine modification. Catalysis depends on Glu166, which acts as the Proton acceptor. Thr173 is modified (phosphothreonine). Lys194 bears the N6-acetyllysine; alternate mark. Position 194 is an N6-succinyllysine; alternate (Lys194). N6-methyllysine; alternate is present on Lys194. Position 198 is a phosphoserine (Ser198). A 3'-nitrotyrosine modification is found at Tyr209. Phosphoserine is present on Ser212. Position 214 is a phosphothreonine (Thr214). A Phosphoserine modification is found at Ser223. Lys238 is modified (N6-acetyllysine).

The protein belongs to the triosephosphate isomerase family. In terms of assembly, homodimer.

It is found in the cytoplasm. It catalyses the reaction D-glyceraldehyde 3-phosphate = dihydroxyacetone phosphate. The enzyme catalyses dihydroxyacetone phosphate = methylglyoxal + phosphate. It functions in the pathway carbohydrate biosynthesis; gluconeogenesis. The protein operates within carbohydrate degradation; glycolysis; D-glyceraldehyde 3-phosphate from glycerone phosphate: step 1/1. Functionally, triosephosphate isomerase is an extremely efficient metabolic enzyme that catalyzes the interconversion between dihydroxyacetone phosphate (DHAP) and D-glyceraldehyde-3-phosphate (G3P) in glycolysis and gluconeogenesis. Its function is as follows. It is also responsible for the non-negligible production of methylglyoxal a reactive cytotoxic side-product that modifies and can alter proteins, DNA and lipids. This chain is Triosephosphate isomerase, found in Mesocricetus auratus (Golden hamster).